Here is a 368-residue protein sequence, read N- to C-terminus: 3-dehydroquinate synthase (368 aa).

Residues 69-74, 103-107, 127-128, Lys-140, and Lys-149 contribute to the NAD(+) site; these read DGEAYK, GVIGD, and TT. Zn(2+) is bound by residues Glu-182, His-245, and His-262.

Belongs to the sugar phosphate cyclases superfamily. Dehydroquinate synthase family. Co(2+) is required as a cofactor. Requires Zn(2+) as cofactor. NAD(+) serves as cofactor.

The protein localises to the cytoplasm. The catalysed reaction is 7-phospho-2-dehydro-3-deoxy-D-arabino-heptonate = 3-dehydroquinate + phosphate. The protein operates within metabolic intermediate biosynthesis; chorismate biosynthesis; chorismate from D-erythrose 4-phosphate and phosphoenolpyruvate: step 2/7. In terms of biological role, catalyzes the conversion of 3-deoxy-D-arabino-heptulosonate 7-phosphate (DAHP) to dehydroquinate (DHQ). This chain is 3-dehydroquinate synthase, found in Pseudomonas aeruginosa (strain UCBPP-PA14).